Consider the following 749-residue polypeptide: Probable serine/threonine-protein kinase drkC (749 aa).

Positions 1–31 (MIIINKYIRMNKIAILFSFFILICCTGYSIS) are cleaved as a signal peptide. Residues 32–423 (YKINGINENK…TSPNYQKIIY (392 aa)) are Extracellular-facing. A disordered region spans residues 124–153 (DRTDQVSTSSSSSSFSEENKKSSSDDSAPA). Over residues 130–139 (STSSSSSSFS) the composition is skewed to low complexity. Residues N157, N189, N283, N358, N373, N381, and N397 are each glycosylated (N-linked (GlcNAc...) asparagine). Residues 424-444 (IVVGVGIAVLLIIAVGIYFII) traverse the membrane as a helical segment. The Cytoplasmic segment spans residues 445–749 (RLRIKNKRLN…QEIVKRLEAM (305 aa)). A Protein kinase domain is found at 491–749 (IVVQNRIGRG…QEIVKRLEAM (259 aa)). Residues 497–505 (IGRGSCAEV) and K518 each bind ATP. The active-site Proton acceptor is the D615.

The protein belongs to the protein kinase superfamily. TKL Ser/Thr protein kinase family.

The protein localises to the membrane. The catalysed reaction is L-seryl-[protein] + ATP = O-phospho-L-seryl-[protein] + ADP + H(+). The enzyme catalyses L-threonyl-[protein] + ATP = O-phospho-L-threonyl-[protein] + ADP + H(+). The sequence is that of Probable serine/threonine-protein kinase drkC (drkC) from Dictyostelium discoideum (Social amoeba).